A 354-amino-acid polypeptide reads, in one-letter code: tRNA-specific 2-thiouridylase MnmA (354 aa).

ATP is bound by residues 6–13 (LLSGGVDS) and Leu33. Cys100 acts as the Nucleophile in catalysis. The cysteines at positions 100 and 195 are disulfide-linked. Gly123 provides a ligand contact to ATP. The interval 145 to 147 (KDQ) is interaction with tRNA. The active-site Cysteine persulfide intermediate is the Cys195.

This sequence belongs to the MnmA/TRMU family.

It is found in the cytoplasm. It carries out the reaction S-sulfanyl-L-cysteinyl-[protein] + uridine(34) in tRNA + AH2 + ATP = 2-thiouridine(34) in tRNA + L-cysteinyl-[protein] + A + AMP + diphosphate + H(+). In terms of biological role, catalyzes the 2-thiolation of uridine at the wobble position (U34) of tRNA, leading to the formation of s(2)U34. This chain is tRNA-specific 2-thiouridylase MnmA, found in Borrelia recurrentis (strain A1).